Here is a 322-residue protein sequence, read N- to C-terminus: MNDAKYGVLLVNLGTPDAPQPDAVKRYLAQFLSDPRVVDVSPWIWKPILHGVILPFRSPKVAKLYQQIWLPDGSPLLVYSRAQQKALAQRFAHIPVELGMCYGNPSLNEGLTRLLAQGVEKLIVLPLYPQYSCSTSGAVFDGISQLFKTMRTIPSLHFVRSYAQHPLYIKALVNSIDESFKQHGKPDRLVLSFHGIPERFIKTGDIYFDECCLTVEKLKQQLDYPAEKVMMTFQSRFGREPWLSPYTDKTMEKLGSEGVEHVQVICPGFSSDCLETLEEINEQNREFFIHGGGKQYEYIPALNDKVEHIDLLEAIIRDICEK.

The Fe cation site is built by His-194 and Glu-275.

The protein belongs to the ferrochelatase family.

Its subcellular location is the cytoplasm. The catalysed reaction is heme b + 2 H(+) = protoporphyrin IX + Fe(2+). Its pathway is porphyrin-containing compound metabolism; protoheme biosynthesis; protoheme from protoporphyrin-IX: step 1/1. Its function is as follows. Catalyzes the ferrous insertion into protoporphyrin IX. This Proteus mirabilis (strain HI4320) protein is Ferrochelatase.